An 840-amino-acid chain; its full sequence is Aconitase AMT8 (840 aa).

258-260 (DSH) is a binding site for substrate. Residues C450, C513, and C516 each contribute to the [4Fe-4S] cluster site. Residues R536, R541, and 709-710 (SR) each bind substrate.

Belongs to the aconitase/IPM isomerase family.

Its pathway is mycotoxin biosynthesis. Aconitase; part of the gene clusters that mediate the biosynthesis of AM-toxins, host-selective toxins (HSTs) causing Alternaria blotch on apple, a worldwide distributed disease. AM-toxins are cyclic depsipeptides containing the 3 residues 2-hydroxy-isovaleric acid (2-HIV), dehydroalanine, L-alanine which are common for all 3 AM-toxins I to III. The fourth precursor is L-alpha-amino-methoxyphenyl-valeric acid (L-Amv) for AM-toxin I, L-alpha-amino-phenyl-valeric acid (L-Apv) for AM-toxin II, and L-alpha-amino-hydroxyphenyl-valeric acid (L-Ahv) for AM-toxin III. AM-toxins have two target sites for affecting susceptible apple cells; they cause invagination of the plasma membrane and electrolyte loss and chloroplast disorganization. The non-ribosomal peptide synthetase AMT1 contains 4 catalytic modules and is responsible for activation of each residue in AM-toxin. The aldo-keto reductase AMT2 catalyzes the conversion of 2-keto-isovaleric acid (2-KIV) to 2-hydroxy-isovaleric acid (2-HIV), one of the precursor residues incorporated by AMT1 during AM-toxin biosynthesis, by reduction of its ketone to an alcohol. The cytochrome P450 monooxygenase AMT3 and the thioesterase AMT4 are also important for AM-toxin production, but their exact function within the AM-toxin biosynthesis are not known yet. Up to 21 proteins (including AMT1 to AMT4) are predicted to be involved in AM-toxin biosynthesis since their expression ishighly up-regulated in AM-toxin-producing cultures. This Alternaria alternata (Alternaria rot fungus) protein is Aconitase AMT8.